The sequence spans 415 residues: Serine hydroxymethyltransferase (415 aa).

Residues Leu-117 and 121-123 (GHL) each bind (6S)-5,6,7,8-tetrahydrofolate. Lys-225 carries the post-translational modification N6-(pyridoxal phosphate)lysine. Position 349 to 351 (349 to 351 (SPF)) interacts with (6S)-5,6,7,8-tetrahydrofolate.

It belongs to the SHMT family. In terms of assembly, homodimer. The cofactor is pyridoxal 5'-phosphate.

It localises to the cytoplasm. It carries out the reaction (6R)-5,10-methylene-5,6,7,8-tetrahydrofolate + glycine + H2O = (6S)-5,6,7,8-tetrahydrofolate + L-serine. It participates in one-carbon metabolism; tetrahydrofolate interconversion. The protein operates within amino-acid biosynthesis; glycine biosynthesis; glycine from L-serine: step 1/1. Functionally, catalyzes the reversible interconversion of serine and glycine with tetrahydrofolate (THF) serving as the one-carbon carrier. This reaction serves as the major source of one-carbon groups required for the biosynthesis of purines, thymidylate, methionine, and other important biomolecules. Also exhibits THF-independent aldolase activity toward beta-hydroxyamino acids, producing glycine and aldehydes, via a retro-aldol mechanism. This is Serine hydroxymethyltransferase from Nitratiruptor sp. (strain SB155-2).